Here is a 345-residue protein sequence, read N- to C-terminus: N-acetyl-gamma-glutamyl-phosphate reductase (345 aa).

The active site involves Cys151.

Belongs to the NAGSA dehydrogenase family. Type 1 subfamily.

It localises to the cytoplasm. The catalysed reaction is N-acetyl-L-glutamate 5-semialdehyde + phosphate + NADP(+) = N-acetyl-L-glutamyl 5-phosphate + NADPH + H(+). It functions in the pathway amino-acid biosynthesis; L-arginine biosynthesis; N(2)-acetyl-L-ornithine from L-glutamate: step 3/4. Its function is as follows. Catalyzes the NADPH-dependent reduction of N-acetyl-5-glutamyl phosphate to yield N-acetyl-L-glutamate 5-semialdehyde. This Clostridium novyi (strain NT) protein is N-acetyl-gamma-glutamyl-phosphate reductase.